The sequence spans 257 residues: MTLAVRVIPCLDVDAGRVVKGVNFENLRDAGDPVELAAAYDAQGADELTFLDVTASTADRGTMLDVVSRTAEQVFIPLTVGGGVRTVEDVDRLLRAGADKVSVNTAAIARPELLRELSERFGSQCIVLSVDARTVPQGQPDTPSGWEVTTHGGKRGTGIDAVEWAVRGAELGVGEILLNSMDADGTKAGFDLPMIRAVRAAVHVPVIASGGAGAVEHFAPAVGAGADAVLAASVFHFGDMTIGDVKKSMRAEGITVR.

Active-site residues include Asp-12 and Asp-131.

The protein belongs to the HisA/HisF family. In terms of assembly, heterodimer of HisH and HisF.

It is found in the cytoplasm. The enzyme catalyses 5-[(5-phospho-1-deoxy-D-ribulos-1-ylimino)methylamino]-1-(5-phospho-beta-D-ribosyl)imidazole-4-carboxamide + L-glutamine = D-erythro-1-(imidazol-4-yl)glycerol 3-phosphate + 5-amino-1-(5-phospho-beta-D-ribosyl)imidazole-4-carboxamide + L-glutamate + H(+). It participates in amino-acid biosynthesis; L-histidine biosynthesis; L-histidine from 5-phospho-alpha-D-ribose 1-diphosphate: step 5/9. Functionally, IGPS catalyzes the conversion of PRFAR and glutamine to IGP, AICAR and glutamate. The HisF subunit catalyzes the cyclization activity that produces IGP and AICAR from PRFAR using the ammonia provided by the HisH subunit. The polypeptide is Imidazole glycerol phosphate synthase subunit HisF (Rhodococcus opacus (strain B4)).